Consider the following 551-residue polypeptide: Tetrachloroethene reductive dehalogenase (551 aa).

A signal peptide (tat-type signal) is located at residues 1-39 (MGEINRRNFLKVSILGAAAAAVASASAVKGMVSPLVADA). Residues 411-440 (PRKFGVREFCRLCKKCADACPAQAISHEKD) form the 4Fe-4S ferredoxin-type 1 domain. The [4Fe-4S] cluster site is built by C420, C423, C426, C430, C467, C478, C481, and C485. The 19-residue stretch at 478-496 (CSNCVAVCSWNKVETWNHD) folds into the 4Fe-4S ferredoxin-type 2 domain.

The protein belongs to the PceA family. The cofactor is [4Fe-4S] cluster. Corrinoid serves as cofactor. Predicted to be exported by the Tat system. The position of the signal peptide cleavage has not been experimentally proven.

Its subcellular location is the cell membrane. The catalysed reaction is trichloroethene + chloride + A + H(+) = tetrachloroethene + AH2. It catalyses the reaction trichloroethene + AH2 = (Z)-1,2-dichloroethene + chloride + A + H(+). Its function is as follows. Catalyzes the reductive dechlorination of tetrachloroethene (PCE) to trichloroethene (TCE) and of trichloroethene to cis-1,2-dichloroethene (DCE). This chain is Tetrachloroethene reductive dehalogenase, found in Desulfitobacterium hafniense (Desulfitobacterium frappieri).